A 543-amino-acid polypeptide reads, in one-letter code: Protein DETOXIFICATION 47, chloroplastic (543 aa).

The transit peptide at 1–30 directs the protein to the chloroplast; the sequence is MLIKSQRLTLFSPLLSKTRRIPVNSHQTLV. A coiled-coil region spans residues 55 to 94; the sequence is VIRRRIKLERVTRNCVRIDREIDEEEEEEEKERGDLVKQS. The next 12 membrane-spanning stretches (helical) occupy residues 107 to 127, 135 to 155, 181 to 201, 228 to 248, 256 to 276, 278 to 298, 319 to 339, 342 to 362, 406 to 426, 443 to 463, 472 to 492, and 497 to 517; these read GPAM…TVVI, LAAL…FMFL, VLLF…RLFG, GLAW…LGMK, ALAA…LFLG, GIAG…YMMM, LWKI…KIAF, FIIY…QVMA, IIGA…PGLF, LLIP…LEGT, FVSS…MFVT, and GLLG…GLYL.

This sequence belongs to the multi antimicrobial extrusion (MATE) (TC 2.A.66.1) family. Preferentially expressed in the epidermal cells.

Its subcellular location is the plastid. The protein localises to the chloroplast membrane. Its function is as follows. Functions as a multidrug and toxin extrusion transporter in the export of salicylic acid (SA) from the chloroplast to the cytoplasm. Plays an essential function in plant defense via the pathogen-induced salicylic acid (SA) accumulation. Also acts as a key component of the Age-related resistance (ARR) pathway. The protein is Protein DETOXIFICATION 47, chloroplastic of Arabidopsis thaliana (Mouse-ear cress).